We begin with the raw amino-acid sequence, 433 residues long: uncharacterized protein (433 aa).

This sequence belongs to the arrestin family.

This is an uncharacterized protein from Schizosaccharomyces pombe (strain 972 / ATCC 24843) (Fission yeast).